The primary structure comprises 507 residues: MGVFRFISISLAAVSAANAAQILSMPHAQTVPHSYIVMMKDDTSDDDFNHHQSWLQSTHTHNITRRATIQNAGMRHKYNFRKMKGYSGIFDEETIKDIAKDPKVMFVEPDTIISVNGKVEQSNVPSWGLARISNSQPGANSYVYDSSAGEGITVYSVDTGVDINHEDFEGRAIWGSNQVNDGDDRDGSGHGTHTSGTMVGKEFGIAKKAKLVAVKVLGNDGSGPTSGIVAGINWCVEHARQNGGTDKAVMNMSLGGSSSSALNRAAAQAVEQGMFLSVAAGNENQDARSSSPASEPSVCTVGSSAEDDSRSSFSNWGPALDLFAPGSNIISARPGGGSQSMSGTSMAAPHVAGLAAYLMALEGISGGAVCDRLKELGSSSITDVGPGTPTNVLISNGGAKGGNPKPAPGPSPNPSQPSEPQQPAPSQPGEPGESFPGEPFPGEPFPGEPFPGESSPGESAPAPAPMPPSPQHPHTPYPGGDNFDFDGYWKKYFGGEHWRKMFGSFWN.

Positions 1–19 (MGVFRFISISLAAVSAANA) are cleaved as a signal peptide. Residues 20 to 116 (AQILSMPHAQ…VEPDTIISVN (97 aa)) constitute a propeptide that is removed on maturation. The 80-residue stretch at 34-113 (SYIVMMKDDT…VMFVEPDTII (80 aa)) folds into the Inhibitor I9 domain. The Peptidase S8 domain maps to 126–400 (SWGLARISNS…NVLISNGGAK (275 aa)). Residues aspartate 158 and histidine 190 each act as charge relay system in the active site. Residues 175–198 (GSNQVNDGDDRDGSGHGTHTSGTM) are disordered. Asparagine 251 carries N-linked (GlcNAc...) asparagine glycosylation. The segment covering 282-294 (NENQDARSSSPAS) has biased composition (polar residues). The interval 282-312 (NENQDARSSSPASEPSVCTVGSSAEDDSRSS) is disordered. Serine 345 functions as the Charge relay system in the catalytic mechanism. Positions 378–394 (SSSITDVGPGTPTNVLI) are enriched in polar residues. A disordered region spans residues 378–486 (SSSITDVGPG…YPGGDNFDFD (109 aa)). 2 stretches are compositionally biased toward pro residues: residues 405–428 (KPAPGPSPNPSQPSEPQQPAPSQP) and 438–449 (EPFPGEPFPGEP). The segment covering 450–461 (FPGESSPGESAP) has biased composition (low complexity). Pro residues predominate over residues 462–476 (APAPMPPSPQHPHTP).

Belongs to the peptidase S8 family.

It is found in the secreted. Secreted subtilisin-like serine protease with keratinolytic activity that contributes to pathogenicity. This is Subtilisin-like protease 1 (SUB1) from Trichophyton tonsurans (Scalp ringworm fungus).